A 681-amino-acid chain; its full sequence is Amine oxidase [copper-containing] alpha 3, peroxisomal (681 aa).

323–334 (YLDCGDFGCGQC) is a binding site for substrate. Asp325 (proton acceptor) is an active-site residue. Cys344 and Cys370 form a disulfide bridge. 410–415 (VGNYDY) serves as a coordination point for substrate. The active-site Schiff-base intermediate with substrate; via topaquinone is the Tyr413. The residue at position 413 (Tyr413) is a 2',4',5'-topaquinone. 2 residues coordinate Cu cation: His470 and His472. Mn(2+) contacts are provided by Asp481, Asp621, and Ile622. Position 632 (His632) interacts with Cu cation.

It belongs to the copper/topaquinone oxidase family. Post-translationally, topaquinone (TPQ) is generated by copper-dependent autoxidation of a specific tyrosyl residue. In terms of tissue distribution, mostly expressed in stems, and, at lower levels, in flowers and leaves. Mainly detectable in stipules, hypocotyls and roots.

It localises to the peroxisome. It carries out the reaction a primary methyl amine + O2 + H2O = an aldehyde + H2O2 + NH4(+). Its pathway is amine and polyamine degradation; putrescine degradation. Copper amine oxidase that can use putrescine and spermidine as substrates. Involved in putrescine catabolism in peroxisomes. The protein is Amine oxidase [copper-containing] alpha 3, peroxisomal of Arabidopsis thaliana (Mouse-ear cress).